The primary structure comprises 886 residues: Alanine--tRNA ligase (886 aa).

Residues H564, H568, C666, and H670 each contribute to the Zn(2+) site.

It belongs to the class-II aminoacyl-tRNA synthetase family. Zn(2+) is required as a cofactor.

Its subcellular location is the cytoplasm. It catalyses the reaction tRNA(Ala) + L-alanine + ATP = L-alanyl-tRNA(Ala) + AMP + diphosphate. In terms of biological role, catalyzes the attachment of alanine to tRNA(Ala) in a two-step reaction: alanine is first activated by ATP to form Ala-AMP and then transferred to the acceptor end of tRNA(Ala). Also edits incorrectly charged Ser-tRNA(Ala) and Gly-tRNA(Ala) via its editing domain. The chain is Alanine--tRNA ligase from Prochlorococcus marinus (strain MIT 9312).